We begin with the raw amino-acid sequence, 240 residues long: Ribonuclease P protein component 3 (240 aa).

Belongs to the eukaryotic/archaeal RNase P protein component 3 family. In terms of assembly, consists of a catalytic RNA component and at least 4-5 protein subunits.

The protein localises to the cytoplasm. The catalysed reaction is Endonucleolytic cleavage of RNA, removing 5'-extranucleotides from tRNA precursor.. Functionally, part of ribonuclease P, a protein complex that generates mature tRNA molecules by cleaving their 5'-ends. This chain is Ribonuclease P protein component 3, found in Halorubrum lacusprofundi (strain ATCC 49239 / DSM 5036 / JCM 8891 / ACAM 34).